The following is a 72-amino-acid chain: Cold shock-like protein CspD (72 aa).

One can recognise a CSD domain in the interval 4 to 64; sequence GIVKWFNNAK…SDKGSHATKI (61 aa).

It localises to the cytoplasm. In Haemophilus influenzae (strain ATCC 51907 / DSM 11121 / KW20 / Rd), this protein is Cold shock-like protein CspD (cspD).